Consider the following 492-residue polypeptide: Ribose import ATP-binding protein RbsA (492 aa).

ABC transporter domains lie at 3–239 (IEMK…VGRS) and 249–492 (AEIR…TGGQ). 35–42 (GENGAGKS) lines the ATP pocket.

It belongs to the ABC transporter superfamily. Ribose importer (TC 3.A.1.2.1) family. The complex is composed of an ATP-binding protein (RbsA), two transmembrane proteins (RbsC) and a solute-binding protein (RbsB).

The protein resides in the cell membrane. It carries out the reaction D-ribose(out) + ATP + H2O = D-ribose(in) + ADP + phosphate + H(+). Its function is as follows. Part of the ABC transporter complex RbsABC involved in ribose import. Responsible for energy coupling to the transport system. The polypeptide is Ribose import ATP-binding protein RbsA (Lactococcus lactis subsp. lactis (strain IL1403) (Streptococcus lactis)).